The chain runs to 356 residues: DNA polymerase IV (356 aa).

The 188-residue stretch at 1 to 188 (MDTSRKIIHI…IPVTKFYGVG (188 aa)) folds into the UmuC domain. Mg(2+) contacts are provided by aspartate 11 and aspartate 106. The active site involves glutamate 107.

Belongs to the DNA polymerase type-Y family. As to quaternary structure, monomer. Mg(2+) is required as a cofactor.

It is found in the cytoplasm. It catalyses the reaction DNA(n) + a 2'-deoxyribonucleoside 5'-triphosphate = DNA(n+1) + diphosphate. In terms of biological role, poorly processive, error-prone DNA polymerase involved in untargeted mutagenesis. Copies undamaged DNA at stalled replication forks, which arise in vivo from mismatched or misaligned primer ends. These misaligned primers can be extended by PolIV. Exhibits no 3'-5' exonuclease (proofreading) activity. May be involved in translesional synthesis, in conjunction with the beta clamp from PolIII. In Listeria monocytogenes serotype 4b (strain F2365), this protein is DNA polymerase IV.